A 150-amino-acid polypeptide reads, in one-letter code: Translation machinery-associated protein 17 (150 aa).

A phosphoserine mark is found at serine 24 and serine 68. The segment at arginine 110 to asparagine 139 is disordered. The span at lysine 118–threonine 127 shows a compositional bias: basic and acidic residues.

As to quaternary structure, interacts with RPT6. Interacts with the 40S and 60S ribosomal subunits.

The protein resides in the cytoplasm. It is found in the nucleus. Functionally, ATPase-dedicated chaperone that assists the formation of the RPT6-RPT3 ATPase pair, an early step in proteasome assembly. Plays a key role in maintaining homeostatic proteasome levels and adjusting proteasome assembly when demands increase, such as during proteasome stresses. Function overlaps with RPN14. This chain is Translation machinery-associated protein 17 (TMA17), found in Saccharomyces cerevisiae (strain ATCC 204508 / S288c) (Baker's yeast).